Here is a 74-residue protein sequence, read N- to C-terminus: uncharacterized protein (74 aa).

2 stretches are compositionally biased toward basic and acidic residues: residues 1 to 13 (MKKQKSIDKHQLK) and 20 to 60 (IKAK…KSFE). The tract at residues 1-74 (MKKQKSIDKH…ESQMDWHQYK (74 aa)) is disordered. Residues 64-74 (NESQMDWHQYK) show a composition bias toward polar residues.

This is an uncharacterized protein from Bacillus subtilis (strain 168).